A 530-amino-acid polypeptide reads, in one-letter code: Autoinducer-2 kinase (530 aa).

The protein belongs to the FGGY kinase family.

The protein localises to the cytoplasm. It carries out the reaction (S)-4,5-dihydroxypentane-2,3-dione + ATP = (2S)-2-hydroxy-3,4-dioxopentyl phosphate + ADP + H(+). Catalyzes the phosphorylation of autoinducer-2 (AI-2) to phospho-AI-2, which subsequently inactivates the transcriptional regulator LsrR and leads to the transcription of the lsr operon. Phosphorylates the ring-open form of (S)-4,5-dihydroxypentane-2,3-dione (DPD), which is the precursor to all AI-2 signaling molecules, at the C5 position. This is Autoinducer-2 kinase from Yersinia pestis bv. Antiqua (strain Antiqua).